The primary structure comprises 224 residues: tRNA (guanine-N(7)-)-methyltransferase (224 aa).

Residues Glu-54, Glu-79, Glu-106, and Asp-129 each coordinate S-adenosyl-L-methionine. Residue Asp-129 is part of the active site. Substrate contacts are provided by Lys-133 and Asp-165.

It belongs to the class I-like SAM-binding methyltransferase superfamily. TrmB family.

It carries out the reaction guanosine(46) in tRNA + S-adenosyl-L-methionine = N(7)-methylguanosine(46) in tRNA + S-adenosyl-L-homocysteine. It functions in the pathway tRNA modification; N(7)-methylguanine-tRNA biosynthesis. Catalyzes the formation of N(7)-methylguanine at position 46 (m7G46) in tRNA. This is tRNA (guanine-N(7)-)-methyltransferase from Chlamydia caviae (strain ATCC VR-813 / DSM 19441 / 03DC25 / GPIC) (Chlamydophila caviae).